The primary structure comprises 24 residues: DCCGVKLEMCHPCLCDNSCKNYGK.

3 cysteine pairs are disulfide-bonded: C2–C10, C3–C15, and C13–C19. At K24 the chain carries Lysine amide.

Belongs to the conotoxin A superfamily. As to expression, expressed by the venom duct.

Its subcellular location is the secreted. In terms of biological role, probable neurotoxin with ion channel inhibitor activity. In vivo, elicits dose-dependently excitatory activity upon injection into fish. Its action is slowly reversible. The chain is Conotoxin PIVE from Conus purpurascens (Purple cone).